A 256-amino-acid chain; its full sequence is HTH-type transcriptional regulator PrtR (256 aa).

Positions 16 to 69 constitute an HTH cro/C1-type domain; that stretch reads LKQAMAMRNLKQETLAEAAGVSQNTIHKLTSGKAQSTRKLIEIAAALGVSPVWL. A DNA-binding region (H-T-H motif) is located at residues 27 to 46; it reads QETLAEAAGVSQNTIHKLTS.

Functionally, represses the promoter activity of the prtN gene. The polypeptide is HTH-type transcriptional regulator PrtR (prtR) (Pseudomonas aeruginosa (strain ATCC 15692 / DSM 22644 / CIP 104116 / JCM 14847 / LMG 12228 / 1C / PRS 101 / PAO1)).